Here is a 433-residue protein sequence, read N- to C-terminus: Protein slt1 (433 aa).

3 disordered regions span residues 159–184, 200–234, and 252–433; these read SPEE…SEYA, NAPE…EELS, and SNKR…DEDA. Polar residues-rich tracts occupy residues 172-184 and 215-228; these read DQQT…SEYA and TLPN…QASV. Residues Ser227, Ser229, and Ser269 each carry the phosphoserine modification. The span at 343–353 shows a compositional bias: basic and acidic residues; the sequence is IDTKAGEKLTD. A compositionally biased stretch (polar residues) spans 385–421; sequence EGSNNHEQGSFNEPKSNVDSNDSASPKRPSSQASLRH. Phosphoserine is present on residues Ser409, Ser415, and Ser418.

This chain is Protein slt1 (slt1), found in Schizosaccharomyces pombe (strain 972 / ATCC 24843) (Fission yeast).